Here is an 893-residue protein sequence, read N- to C-terminus: 26S proteasome non-ATPase regulatory subunit 2 (893 aa).

A disordered region spans residues 1 to 59 (MPQKEVTIPVPAKGGSNKEEDKKDNKDTEEKNTTTNTTTKDNKKDKKKDKKEETLSPED). 2 stretches are compositionally biased toward basic and acidic residues: residues 16–32 (SNKEEDKKDNKDTEEKN) and 40–59 (KDNKKDKKKDKKEETLSPED). 7 PC repeats span residues 412–445 (STVASTGMVVLWDIDGGLTKIDKFLYSQEKHCSN), 446–482 (GALMAIGMLTSGIRSEMDPALSLLAEHINSSNTGTRI), 483–517 (SAIFGLGLAYAGTQRQDLMSLLSPCLDDDKEKMEF), 522–555 (GLALGLIFIGSCDPELSTLFVQTLIQRGTAASES), 562–583 (LGLGLLYLGKQDAAELALETLK), 666–700 (AIPLALGLLSPSNPRIAIMDILSKLSHDNDPEVAQ), and 701–735 (GAILSLGLIGAGTNNARIGGMLRALAVFYGKDVHL).

The protein belongs to the proteasome subunit S2 family.

Functionally, acts as a regulatory subunit of the 26 proteasome which is involved in the ATP-dependent degradation of ubiquitinated proteins. The protein is 26S proteasome non-ATPase regulatory subunit 2 (psmD2) of Dictyostelium discoideum (Social amoeba).